A 309-amino-acid chain; its full sequence is Succinoglycan biosynthesis protein ExoM (309 aa).

It belongs to the glycosyltransferase 2 family.

Its subcellular location is the cell inner membrane. It participates in glycan metabolism; exopolysaccharide biosynthesis. Glycosyltransferase required for the synthesis of succinoglycan (EPS I). Needed for the addition of the fourth sugar (glucose), catalyzes the formation of a beta-1,4 linkage between the third acetylated sugar and the fourth sugar. The protein is Succinoglycan biosynthesis protein ExoM (exoM) of Rhizobium meliloti (strain 1021) (Ensifer meliloti).